We begin with the raw amino-acid sequence, 509 residues long: tRNA-2-methylthio-N(6)-dimethylallyladenosine synthase (509 aa).

Polar residues predominate over residues Met1–Ser15. The disordered stretch occupies residues Met1–Tyr26. Residues Thr16–Lys25 show a composition bias toward basic and acidic residues. The 119-residue stretch at Arg66 to Phe184 folds into the MTTase N-terminal domain. [4Fe-4S] cluster-binding residues include Cys75, Cys111, Cys145, Cys221, Cys225, and Cys228. The 231-residue stretch at Arg207–Glu437 folds into the Radical SAM core domain. The 64-residue stretch at Asp440–Glu503 folds into the TRAM domain.

This sequence belongs to the methylthiotransferase family. MiaB subfamily. In terms of assembly, monomer. Requires [4Fe-4S] cluster as cofactor.

The protein resides in the cytoplasm. It carries out the reaction N(6)-dimethylallyladenosine(37) in tRNA + (sulfur carrier)-SH + AH2 + 2 S-adenosyl-L-methionine = 2-methylsulfanyl-N(6)-dimethylallyladenosine(37) in tRNA + (sulfur carrier)-H + 5'-deoxyadenosine + L-methionine + A + S-adenosyl-L-homocysteine + 2 H(+). Functionally, catalyzes the methylthiolation of N6-(dimethylallyl)adenosine (i(6)A), leading to the formation of 2-methylthio-N6-(dimethylallyl)adenosine (ms(2)i(6)A) at position 37 in tRNAs that read codons beginning with uridine. This Bacillus cereus (strain ZK / E33L) protein is tRNA-2-methylthio-N(6)-dimethylallyladenosine synthase.